We begin with the raw amino-acid sequence, 265 residues long: Bradykinin-potentiating and C-type natriuretic peptides (265 aa).

Residues 1–23 form the signal peptide; it reads MVLSRLAASGLLLLALLALSVDG. Residues 24 to 30 constitute a propeptide that is removed on maturation; the sequence is KPVQQWA. Glutamine 31 bears the Pyrrolidone carboxylic acid mark. The propeptide occupies 44–50; it reads LKVQQWA. Position 51 is a pyrrolidone carboxylic acid (glutamine 51). The propeptide occupies 64-70; it reads LTVQQWA. Glutamine 71 is modified (pyrrolidone carboxylic acid). Residues 81–87 constitute a propeptide that is removed on maturation; that stretch reads LTVQQWA. The residue at position 88 (glutamine 88) is a Pyrrolidone carboxylic acid. Residues 100-106 constitute a propeptide that is removed on maturation; it reads LEVQQWA. Glutamine 107 carries the pyrrolidone carboxylic acid modification. Residues 118-120 constitute a propeptide that is removed on maturation; the sequence is APL. Residue glutamine 121 is modified to Pyrrolidone carboxylic acid. Valine 126 is a propeptide. Glutamine 127 is subject to Pyrrolidone carboxylic acid. The propeptide occupies 132–241; the sequence is LLQPHESPAS…GGARRLKGLA (110 aa). Residues 153–211 form a disordered region; that stretch reads GPEAASGVPSAGAEVGRSGSKAPAAPHRLSKSKGAAATSAASRPMRDLRPDGKQARQNW. The span at 184-194 shows a compositional bias: low complexity; it reads SKGAAATSAAS. A compositionally biased stretch (basic and acidic residues) spans 196–206; sequence PMRDLRPDGKQ. An intrachain disulfide couples cysteine 249 to cysteine 265.

This sequence in the N-terminal section; belongs to the bradykinin-potentiating peptide family. It in the C-terminal section; belongs to the natriuretic peptide family. In terms of tissue distribution, expressed by the venom gland.

It localises to the secreted. Its subcellular location is the cytoplasm. It is found in the cytosol. Functionally, modestly inhibits ACE (with highest affinity for the N-site) and reveals strong bradykinin-potentiating activity. Induces nitric oxide (NO) production depended on muscarinic acetylcholine receptor M1 subtype (CHRM1) and bradykinin B2 receptor (BDKRB2) activation. Both these receptors contribute to the vasodilation induced by this peptide that may have an indirect action on BDKRB2 and a direct agonistic action on CHRM1. Its function is as follows. Peptide with several activities. It inhibits the activity of the angiotensin-converting enzyme (ACE) by a preferential interaction with its C-domain. It evokes transient hypotension (-14 mmHg) similar to that evoked by 0.5 ug of bradykinin, when injected alone into rats. It has a high bradykinin-potentiating effect (120%), when 60 nmol of BPP-10c are coinjected with 0.5 ug of bradykinin into rats. Does not affect angiotensin-1 pressor effects. Shows potent and long-lasting antihypertensive activity as well as a reduction of the heart rate. It also binds and dose-dependently promotes the activation of cytosolic argininosuccinate synthase (ASS1), an enzyme that catalyzes the conversion of citrulline, L-aspartate and ATP to argininosuccinate, AMP and pyrophosphate. It also enhances ASS1-dependent arginine production in HEK 293 cells, as well as in spontaneous hypertensive rat (SHR) and Wistar rat plasma. In addition, it induces the production of nitric-oxide (NO) by HUVEC cells via the endothelial nitric-oxide synthase (NOS3), which use arginine as a substrate and produce NO. It has been shown to be internalized by ASS1-expressing endothelial (HUVEC) and kidney (HEK 293) cells, and is detected homogenously distributed within the cell cytoplasm for up to 2 hours. Has a vasorelaxant activity in rat aortic strips and a diuretic potency in anesthetized rats. May act by activating natriuretic receptors (NPR1 and/or NPR2). The polypeptide is Bradykinin-potentiating and C-type natriuretic peptides (Bothrops insularis (Golden lancehead)).